We begin with the raw amino-acid sequence, 156 residues long: MPRRRVAAKREVLDDPKYGSQILAKFMNHVMESGKKAVAERIVYGALEKVKERKNSDPLEIFEKALDAIAPLVEVKSRRVGGATYQVPVEVRPSRRNALAMRWLVDFARKRGEKSMALRLAGELMDAAEGKGAAVKKREDVHRMAEANKAFSHYRF.

Belongs to the universal ribosomal protein uS7 family. As to quaternary structure, part of the 30S ribosomal subunit. Contacts proteins S9 and S11.

One of the primary rRNA binding proteins, it binds directly to 16S rRNA where it nucleates assembly of the head domain of the 30S subunit. Is located at the subunit interface close to the decoding center, probably blocks exit of the E-site tRNA. In Pseudomonas syringae pv. tomato (strain ATCC BAA-871 / DC3000), this protein is Small ribosomal subunit protein uS7.